We begin with the raw amino-acid sequence, 166 residues long: Ribonuclease P protein component (166 aa).

It belongs to the RnpA family. In terms of assembly, consists of a catalytic RNA component (M1 or rnpB) and a protein subunit.

It catalyses the reaction Endonucleolytic cleavage of RNA, removing 5'-extranucleotides from tRNA precursor.. Its function is as follows. RNaseP catalyzes the removal of the 5'-leader sequence from pre-tRNA to produce the mature 5'-terminus. It can also cleave other RNA substrates such as 4.5S RNA. The protein component plays an auxiliary but essential role in vivo by binding to the 5'-leader sequence and broadening the substrate specificity of the ribozyme. The polypeptide is Ribonuclease P protein component (Helicobacter pylori (strain HPAG1)).